A 160-amino-acid polypeptide reads, in one-letter code: V-type proton ATPase subunit c (160 aa).

Residues 1-6 (MSDLCP) are Lumenal-facing. The helical transmembrane segment at 7-27 (VYAPFFGSIGCAAAIVFTCFG) threads the bilayer. The Cytoplasmic portion of the chain corresponds to 28 to 53 (ASYGTAKSGVGICATSVTRPDLLVKN). The helical transmembrane segment at 54–74 (VVPVVMAGIIAIYGLVVSVLV) threads the bilayer. At 75-90 (SDSLSQKQALYTGFIQ) the chain is on the lumenal side. Residues 91-111 (LGAGLSVGLSGLAAGFAIGIV) traverse the membrane as a helical segment. Topologically, residues 112–129 (GDAGVRGTAQQPRLFVGM) are cytoplasmic. Residues 130 to 150 (ILILIFAEVLGLYGLIVALLL) traverse the membrane as a helical segment. Topologically, residues 151–160 (NSRASQDVTC) are lumenal.

The protein belongs to the V-ATPase proteolipid subunit family. V-ATPase is a heteromultimeric enzyme composed of a peripheral catalytic V1 complex (components A to H) attached to an integral membrane V0 proton pore complex (components: a, c, c', c'', d, e, f and VOA1). The decameric c-ring forms the proton-conducting pore, and is composed of eight proteolipid subunits c, one subunit c' and one subunit c''.

Its subcellular location is the vacuole membrane. Its function is as follows. Proton-conducting pore forming subunit of the V0 complex of vacuolar(H+)-ATPase (V-ATPase), a multisubunit enzyme composed of a peripheral complex (V1) that hydrolyzes ATP and a membrane integral complex (V0) that translocates protons. V-ATPase is responsible for acidifying and maintaining the pH of intracellular compartments. This is V-type proton ATPase subunit c (VMA3) from Candida tropicalis (Yeast).